Consider the following 283-residue polypeptide: uncharacterized protein (283 aa).

Residues 1 to 25 (MNKKRLLFRTPLDALFLLFGTALSA) form the signal peptide. Cys-26 carries the N-palmitoyl cysteine lipid modification. A lipid anchor (S-diacylglycerol cysteine) is attached at Cys-26.

This sequence belongs to the MG439/MG440 family.

It localises to the cell membrane. This is an uncharacterized protein from Mycoplasma pneumoniae (strain ATCC 29342 / M129 / Subtype 1) (Mycoplasmoides pneumoniae).